Reading from the N-terminus, the 436-residue chain is Serine protease hepsin (436 aa).

The tract at residues methionine 1–alanine 29 is disordered. The Cytoplasmic portion of the chain corresponds to methionine 1–alanine 38. Residues alanine 39 to valine 59 form a helical; Signal-anchor for type II membrane protein membrane-spanning segment. Residues threonine 60–proline 436 lie on the Extracellular side of the membrane. The 98-residue stretch at valine 73–glutamine 170 folds into the SRCR domain. 8 cysteine pairs are disulfide-bonded: cysteine 96-cysteine 159, cysteine 109-cysteine 169, cysteine 138-cysteine 157, cysteine 172-cysteine 296, cysteine 207-cysteine 223, cysteine 310-cysteine 378, cysteine 341-cysteine 357, and cysteine 368-cysteine 400. Asparagine 131 carries N-linked (GlcNAc...) asparagine glycosylation. A Peptidase S1 domain is found at isoleucine 182 to lysine 424. Catalysis depends on charge relay system residues histidine 222 and aspartate 276. Serine 372 (charge relay system) is an active-site residue.

Belongs to the peptidase S1 family. In terms of tissue distribution, detected in kidney, in thick ascending tubule epithelial cells (at protein level). Detected in kidney and liver.

The protein resides in the apical cell membrane. The protein localises to the cell membrane. Its subcellular location is the secreted. The catalysed reaction is Cleavage after basic amino-acid residues, with Arg strongly preferred to Lys.. In terms of biological role, serine protease that cleaves extracellular substrates, and contributes to the proteolytic processing of growth factors, such as HGF and MST1/HGFL. Plays a role in cell growth and maintenance of cell morphology. Plays a role in the proteolytic processing of ACE2. Mediates the proteolytic cleavage of urinary UMOD that is required for UMOD polymerization. The protein is Serine protease hepsin (Hpn) of Mus musculus (Mouse).